We begin with the raw amino-acid sequence, 180 residues long: Chromosome-anchoring protein RacA (180 aa).

Positions 5–25 (TPFIAKKLGVSPKAVVRIAQQ) form a DNA-binding region, H-T-H motif. The stretch at 89-151 (SHDFEQLTAQ…LEATLKKEEP (63 aa)) forms a coiled coil.

This sequence belongs to the RacA family.

The protein localises to the cytoplasm. Functionally, required for the formation of axial filaments and for anchoring the origin regions at the cell poles in sporulating cells, thus ensuring proper chromosome segregation in the prespore. Binds in a dispersed manner throughout the chromosome but preferentially to sites clustered in the origin portion of the chromosome, causing condensation of the chromosome and its remodeling into an elongated, anchored structure. The protein is Chromosome-anchoring protein RacA of Bacillus cereus (strain ATCC 10987 / NRS 248).